The sequence spans 515 residues: Cytoplasmic tRNA 2-thiolation protein 2 (515 aa).

Disordered regions lie at residues 1-24 and 188-217; these read MCQV…RPSR and LGAG…ARPP. Cys2 carries the post-translational modification N-acetylcysteine. Ser415, Ser419, Ser435, and Ser508 each carry phosphoserine.

This sequence belongs to the CTU2/NCS2 family. In terms of assembly, component of a complex at least composed of URM1, CTU2/NCS2 and CTU1/ATPBD3.

The protein localises to the cytoplasm. It functions in the pathway tRNA modification; 5-methoxycarbonylmethyl-2-thiouridine-tRNA biosynthesis. Plays a central role in 2-thiolation of mcm(5)S(2)U at tRNA wobble positions of tRNA(Lys), tRNA(Glu) and tRNA(Gln). May act by forming a heterodimer with CTU1/ATPBD3 that ligates sulfur from thiocarboxylated URM1 onto the uridine of tRNAs at wobble position. This Homo sapiens (Human) protein is Cytoplasmic tRNA 2-thiolation protein 2.